A 401-amino-acid chain; its full sequence is Insertion element ISM1 uncharacterized 48.3 kDa protein (401 aa).

Functionally, this polypeptide is involved in transposition, and should therefore bind to nucleic acids. In Methanobrevibacter smithii, this protein is Insertion element ISM1 uncharacterized 48.3 kDa protein.